Consider the following 343-residue polypeptide: N-acetylornithine carbamoyltransferase (343 aa).

Carbamoyl phosphate contacts are provided by residues 49–52, Trp-77, and Arg-112; that span reads SMRT. N(2)-acetyl-L-ornithine is bound at residue Glu-144. Position 148 to 151 (148 to 151) interacts with carbamoyl phosphate; that stretch reads HPCQ. N(2)-acetyl-L-ornithine contacts are provided by Lys-252 and Leu-295. 294–295 contributes to the carbamoyl phosphate binding site; it reads CL. At Lys-302 the chain carries N6-carboxylysine. Arg-322 is a carbamoyl phosphate binding site.

The protein belongs to the aspartate/ornithine carbamoyltransferase superfamily. AOTCase family. In terms of assembly, homotrimer.

Its subcellular location is the cytoplasm. The enzyme catalyses N(2)-acetyl-L-ornithine + carbamoyl phosphate = N(2)-acetyl-L-citrulline + phosphate + H(+). It participates in amino-acid biosynthesis; L-arginine biosynthesis. Carboxylation at Lys-302 increases the catalytic activity of the enzyme. Functionally, catalyzes the transfer of the carbamoyl group from carbamoyl phosphate to the delta-amino group of N(2)-acetyl-L-ornithine to produce N(2)-acetyl-L-citrulline. This is a step in an alternative arginine biosynthesis pathway. The enzyme has no activity with ornithine. This chain is N-acetylornithine carbamoyltransferase, found in Xanthomonas axonopodis pv. citri (strain 306).